A 381-amino-acid polypeptide reads, in one-letter code: Heme A synthase (381 aa).

Residues 1 to 23 are disordered; it reads MARRPVFQEVTETTPPGTTPSGG. The segment covering 11-23 has biased composition (low complexity); that stretch reads TETTPPGTTPSGG. A run of 8 helical transmembrane segments spans residues 34 to 54, 120 to 140, 151 to 171, 185 to 205, 228 to 248, 285 to 305, 319 to 339, and 342 to 362; these read GAIR…IALG, RLLG…FLAT, LLLL…MVHS, LATH…YVLA, TTGL…VAGI, LVQF…VVVF, AYVA…MNVL, and SPLP…TLIL. H290 provides a ligand contact to heme. H350 provides a ligand contact to heme.

This sequence belongs to the COX15/CtaA family. Type 2 subfamily. In terms of assembly, interacts with CtaB. Heme b is required as a cofactor.

The protein resides in the cell membrane. It carries out the reaction Fe(II)-heme o + 2 A + H2O = Fe(II)-heme a + 2 AH2. The protein operates within porphyrin-containing compound metabolism; heme A biosynthesis; heme A from heme O: step 1/1. Its function is as follows. Catalyzes the conversion of heme O to heme A by two successive hydroxylations of the methyl group at C8. The first hydroxylation forms heme I, the second hydroxylation results in an unstable dihydroxymethyl group, which spontaneously dehydrates, resulting in the formyl group of heme A. This is Heme A synthase from Paracoccus denitrificans (strain Pd 1222).